Reading from the N-terminus, the 355-residue chain is Peptide chain release factor 1 (355 aa).

Gln-233 is subject to N5-methylglutamine.

Belongs to the prokaryotic/mitochondrial release factor family. In terms of processing, methylated by PrmC. Methylation increases the termination efficiency of RF1.

It is found in the cytoplasm. Its function is as follows. Peptide chain release factor 1 directs the termination of translation in response to the peptide chain termination codons UAG and UAA. This Bacillus mycoides (strain KBAB4) (Bacillus weihenstephanensis) protein is Peptide chain release factor 1.